We begin with the raw amino-acid sequence, 114 residues long: Phosphoribosyl-AMP cyclohydrolase (114 aa).

Asp-76 contributes to the Mg(2+) binding site. Zn(2+) is bound at residue Cys-77. Mg(2+)-binding residues include Asp-78 and Asp-80. 2 residues coordinate Zn(2+): Cys-93 and Cys-100.

It belongs to the PRA-CH family. As to quaternary structure, homodimer. Mg(2+) serves as cofactor. The cofactor is Zn(2+).

The protein resides in the cytoplasm. It catalyses the reaction 1-(5-phospho-beta-D-ribosyl)-5'-AMP + H2O = 1-(5-phospho-beta-D-ribosyl)-5-[(5-phospho-beta-D-ribosylamino)methylideneamino]imidazole-4-carboxamide. It functions in the pathway amino-acid biosynthesis; L-histidine biosynthesis; L-histidine from 5-phospho-alpha-D-ribose 1-diphosphate: step 3/9. Catalyzes the hydrolysis of the adenine ring of phosphoribosyl-AMP. This is Phosphoribosyl-AMP cyclohydrolase from Streptococcus gordonii (strain Challis / ATCC 35105 / BCRC 15272 / CH1 / DL1 / V288).